Reading from the N-terminus, the 469-residue chain is Phosphoglucosamine mutase (469 aa).

Serine 117 functions as the Phosphoserine intermediate in the catalytic mechanism. Residues serine 117, aspartate 263, aspartate 265, and aspartate 267 each contribute to the Mg(2+) site. Serine 117 bears the Phosphoserine mark.

The protein belongs to the phosphohexose mutase family. Mg(2+) is required as a cofactor. Post-translationally, activated by phosphorylation.

The enzyme catalyses alpha-D-glucosamine 1-phosphate = D-glucosamine 6-phosphate. Functionally, catalyzes the conversion of glucosamine-6-phosphate to glucosamine-1-phosphate. This is Phosphoglucosamine mutase from Anaeromyxobacter sp. (strain Fw109-5).